The following is a 150-amino-acid chain: MAKRVSLPDVVISAPKAVFKPAKEEALACILPKYYKSMADVSIKTNSVIDKCWFCNQDLVFRPISIETYKGGEVGYFCSKICRDSLASMVKSHVALREEPKISLLPLVFYEDKEKVINTINLLRDKDGVYGSCYFKENSQIIDISLRSLL.

The protein belongs to the orthopoxvirus VLTF-2/OPG126 family. As to quaternary structure, interacts with itself. Interacts with the late transcription factors VLTF-1/OPG093.

Acts with RNA polymerase to initiate transcription from late gene promoters. The protein is Viral late gene transcription factor 2 (OPG126) of Vaccinia virus (strain Copenhagen) (VACV).